The following is a 125-amino-acid chain: Aspercryptin biosynthesis cluster protein K (125 aa).

The segment at 104–125 is disordered; sequence QRAESVAGDSRPREHRQGAVGY. Basic and acidic residues predominate over residues 113 to 125; the sequence is SRPREHRQGAVGY.

The protein operates within secondary metabolite biosynthesis. In terms of biological role, part of the gene cluster that mediates the biosynthesis of aspercryptins, linear lipopeptides built from six amino acids including 2 highly unusual and nonproteogenic amino acids, 2-amino-octanoic acid (2aoa) and 2-amino-dodecanol (2adol). The core structure of aspercryptins is as follows: Ser/Ala-Thr-Ile/Val-2aoa-Asn-2adol. The first step of aspercryptin biosynthesis is the generation of the fatty acid precursors, octanoic and dodecanoic acids, by the FAS subunits atnF and atnM. The fatty acid precursors are likely transformed into the corresponding alpha-amino fatty acids in three steps. First, they are hydroxylated by the cytochrome P450 monooxygenase atnE, then oxidized to the corresponding alpha-keto acids by the NAD(P)-dependent oxidoreductase atnD, and finally converted to the alpha-amino fatty acids by the PLP-dependent aminotransferases atnH or atnJ. the alpha-amino fatty acids, 2-amino-octanoic and 2-amino-dodecanoic acids, are recognized, activated, and covalently tethered to the NRPS atnA by its fourth and sixth adenylation domains. The second module of atnA is the Thr module and contains an epimerase (E) domain responsible for the epimerization of Thr to D-allo-Thr. Additionally, despite atnA having only one epimerase domain, the first amino acid of aspercryptin A1 is D-Ser, suggesting that serine is either loaded directly as D-Ser on the first module or that the epimerase domain in the threonine module epimerizes both L-Ser and L-Thr. After condensation of the hexapeptide of aspercryptin, the C-terminal reductase (TE) domain might be involved in the reductive release and production of the aldehyde hexapeptide. Further reduction would generate aspercryptins. The variety of aspercryptins produced reflects the flexibility of the atnA NRPS, allowing incorporation of alanine instead of serine, valine for isoleucine, and a C10 fatty amino alcohol instead of the C12 version. AtnB seems to be involved in the selectivity for Ile versus Val by the third module. Moreover, type B, C and D aspercryptins have an additional N-terminal cichorine, acetyl and propionyl group respectively. This is Aspercryptin biosynthesis cluster protein K from Emericella nidulans (strain FGSC A4 / ATCC 38163 / CBS 112.46 / NRRL 194 / M139) (Aspergillus nidulans).